We begin with the raw amino-acid sequence, 81 residues long: Three-finger toxin 3FTx-Oxy6 (81 aa).

A signal peptide spans 1–21; sequence MKTLLLSLVVMTIVYLDLGYT. Disulfide bonds link Cys24-Cys43, Cys36-Cys61, Cys65-Cys73, and Cys74-Cys79.

This sequence belongs to the three-finger toxin family. Short-chain subfamily. As to expression, expressed by the venom gland.

The protein localises to the secreted. The sequence is that of Three-finger toxin 3FTx-Oxy6 from Oxyuranus microlepidotus (Inland taipan).